Here is a 525-residue protein sequence, read N- to C-terminus: Membrane-bound lytic murein transglycosylase F (525 aa).

The N-terminal stretch at 1–24 (MQIRHFNRLKRSVLLFASVLLLSA) is a signal peptide. Residues 25 to 284 (CQIESQPKSE…SLEEKYIGHI (260 aa)) form a non-LT domain region. The LT domain stretch occupies residues 286–525 (AFDYVDTRAF…VDEDLDQEEE (240 aa)). Residue Glu-329 is part of the active site. A disordered region spans residues 506-525 (VSGASDITNEVDEDLDQEEE). Acidic residues predominate over residues 514–525 (NEVDEDLDQEEE).

In the N-terminal section; belongs to the bacterial solute-binding protein 3 family. It in the C-terminal section; belongs to the transglycosylase Slt family.

The protein localises to the cell outer membrane. It catalyses the reaction Exolytic cleavage of the (1-&gt;4)-beta-glycosidic linkage between N-acetylmuramic acid (MurNAc) and N-acetylglucosamine (GlcNAc) residues in peptidoglycan, from either the reducing or the non-reducing ends of the peptidoglycan chains, with concomitant formation of a 1,6-anhydrobond in the MurNAc residue.. In terms of biological role, murein-degrading enzyme that degrades murein glycan strands and insoluble, high-molecular weight murein sacculi, with the concomitant formation of a 1,6-anhydromuramoyl product. Lytic transglycosylases (LTs) play an integral role in the metabolism of the peptidoglycan (PG) sacculus. Their lytic action creates space within the PG sacculus to allow for its expansion as well as for the insertion of various structures such as secretion systems and flagella. The chain is Membrane-bound lytic murein transglycosylase F from Vibrio parahaemolyticus serotype O3:K6 (strain RIMD 2210633).